A 294-amino-acid polypeptide reads, in one-letter code: Foldase protein PrsA 1 (294 aa).

The N-terminal stretch at 1–21 (MTKLKKVMISVIAATLLLLAG) is a signal peptide. A lipid anchor (N-palmitoyl cysteine) is attached at cysteine 22. Residue cysteine 22 is the site of S-diacylglycerol cysteine attachment. The PpiC domain occupies 135–226 (EPDITVRHIL…YGYHLIQLVK (92 aa)).

Belongs to the PrsA family.

Its subcellular location is the cell membrane. The catalysed reaction is [protein]-peptidylproline (omega=180) = [protein]-peptidylproline (omega=0). Plays a major role in protein secretion by helping the post-translocational extracellular folding of several secreted proteins. The polypeptide is Foldase protein PrsA 1 (Listeria monocytogenes serotype 4b (strain F2365)).